A 67-amino-acid chain; its full sequence is DNA gyrase inhibitor YacG (67 aa).

Positions 10, 13, 29, and 33 each coordinate Zn(2+). Positions 44–57 are enriched in basic and acidic residues; that stretch reads EEKRIPSSGDRSDT. The interval 44-67 is disordered; the sequence is EEKRIPSSGDRSDTDGWSEEENQP.

The protein belongs to the DNA gyrase inhibitor YacG family. In terms of assembly, interacts with GyrB. Zn(2+) serves as cofactor.

Its function is as follows. Inhibits all the catalytic activities of DNA gyrase by preventing its interaction with DNA. Acts by binding directly to the C-terminal domain of GyrB, which probably disrupts DNA binding by the gyrase. The sequence is that of DNA gyrase inhibitor YacG from Cronobacter sakazakii (strain ATCC BAA-894) (Enterobacter sakazakii).